A 358-amino-acid polypeptide reads, in one-letter code: Trace amine-associated receptor 7b (358 aa).

Topologically, residues 1 to 47 (MATDDDRFPWDQDSILSRDLLSASSMQLCYEKLNRSCVRSPYSPGPR) are extracellular. N34 carries an N-linked (GlcNAc...) asparagine glycan. Intrachain disulfides connect C37–C201 and C120–C205. The helical transmembrane segment at 48–68 (LILYAVFGFGAVLAVCGNLLV) threads the bilayer. The Cytoplasmic segment spans residues 69–83 (MTSILHFRQLHSPAN). A helical transmembrane segment spans residues 84–104 (FLVASLACADFLVGLTVMPFS). Residues 105–125 (MVRSVEGCWYFGDIYCKFHSS) are Extracellular-facing. The chain crosses the membrane as a helical span at residues 126–147 (FDGSFCYSSIFHLCFISADRYI). Topologically, residues 148 to 166 (AVSDPLIYPTRFTASVSGK) are cytoplasmic. A helical transmembrane segment spans residues 167-187 (CITFSWLLSIIYSFSLFYTGV). Over 188 to 211 (NEAGLEDLVSALTCVGGCQIAVNQ) the chain is Extracellular. N210 is a glycosylation site (N-linked (GlcNAc...) asparagine). Residues 212-232 (SWVFINFLLFLVPALVMMTVY) form a helical membrane-spanning segment. Residues 233–274 (SKIFLIAKQQAQNIEKMGKQTARASESYKDRVAKRERKAAKT) lie on the Cytoplasmic side of the membrane. The chain crosses the membrane as a helical span at residues 275 to 295 (LGIAVAAFLLSWLPYFIDSII). Residues 296–309 (DAFLGFVTPTYVYE) lie on the Extracellular side of the membrane. The chain crosses the membrane as a helical span at residues 310–332 (ILVWIGYYNSAMNPLIYAFFYPW). At 333-358 (FRKAIKLIVTGKILRENSSATNLFPE) the chain is on the cytoplasmic side.

It belongs to the G-protein coupled receptor 1 family.

Its subcellular location is the cell membrane. Functionally, olfactory receptor specific for N,N-dimethylalkylamines trace amines, such as N,N-dimethylcyclohexylamine. Trace amine compounds are enriched in animal body fluids and act on trace amine-associated receptors (TAARs) to elicit both intraspecific and interspecific innate behaviors. Ligand-binding causes a conformation change that triggers signaling via G(s)-class of G alpha proteins (GNAL or GNAS). In Rattus norvegicus (Rat), this protein is Trace amine-associated receptor 7b.